Consider the following 376-residue polypeptide: UDP-N-acetylenolpyruvoylglucosamine reductase (376 aa).

One can recognise an FAD-binding PCMH-type domain in the interval 48 to 219 (VGGPARHLVI…LDVTMQFNLG (172 aa)). The active site involves arginine 196. Catalysis depends on serine 274, which acts as the Proton donor. The active site involves glutamate 368.

It belongs to the MurB family. The cofactor is FAD.

It is found in the cytoplasm. It catalyses the reaction UDP-N-acetyl-alpha-D-muramate + NADP(+) = UDP-N-acetyl-3-O-(1-carboxyvinyl)-alpha-D-glucosamine + NADPH + H(+). Its pathway is cell wall biogenesis; peptidoglycan biosynthesis. Functionally, cell wall formation. The sequence is that of UDP-N-acetylenolpyruvoylglucosamine reductase from Cutibacterium acnes (strain DSM 16379 / KPA171202) (Propionibacterium acnes).